We begin with the raw amino-acid sequence, 222 residues long: Glutathione S-transferase A6 (222 aa).

One can recognise a GST N-terminal domain in the interval 3-83; it reads EKPLFHYDEA…YFSSKYNLYG (81 aa). Glutathione-binding positions include tyrosine 9, arginine 45, 54-55, and 67-68; these read QV and QT. The region spanning 85 to 208 is the GST C-terminal domain; sequence DMKERALIDM…QPGSQRQPPV (124 aa).

This sequence belongs to the GST superfamily. Alpha family. Homodimer or heterodimer of GSTA1 and GSTA2.

The protein resides in the cytoplasm. It carries out the reaction RX + glutathione = an S-substituted glutathione + a halide anion + H(+). Functionally, conjugation of reduced glutathione to a wide number of exogenous and endogenous hydrophobic electrophiles. In Rattus norvegicus (Rat), this protein is Glutathione S-transferase A6 (Gsta6).